We begin with the raw amino-acid sequence, 322 residues long: CRISPR-associated endonuclease Cas1 (322 aa).

Residues glutamate 149, histidine 214, and glutamate 229 each contribute to the Mn(2+) site.

The protein belongs to the CRISPR-associated endonuclease Cas1 family. In terms of assembly, homodimer, forms a heterotetramer with a Cas2 homodimer. Mg(2+) is required as a cofactor. The cofactor is Mn(2+).

Its function is as follows. CRISPR (clustered regularly interspaced short palindromic repeat), is an adaptive immune system that provides protection against mobile genetic elements (viruses, transposable elements and conjugative plasmids). CRISPR clusters contain spacers, sequences complementary to antecedent mobile elements, and target invading nucleic acids. CRISPR clusters are transcribed and processed into CRISPR RNA (crRNA). Acts as a dsDNA endonuclease. Involved in the integration of spacer DNA into the CRISPR cassette. The sequence is that of CRISPR-associated endonuclease Cas1 from Methanocaldococcus jannaschii (strain ATCC 43067 / DSM 2661 / JAL-1 / JCM 10045 / NBRC 100440) (Methanococcus jannaschii).